Consider the following 563-residue polypeptide: Putative GMC-type oxidoreductase L128 (563 aa).

An N-terminal signal peptide occupies residues 1-21 (MTSSIVLKFFLIATLLVIANS). Residue 48-77 (DYVIVGGGAAGSVLLDKCISYGYKCTLIER) participates in FAD binding. Histidine 504 functions as the Proton acceptor in the catalytic mechanism.

This sequence belongs to the GMC oxidoreductase family. FAD serves as cofactor.

The chain is Putative GMC-type oxidoreductase L128 from Acanthamoeba polyphaga mimivirus (APMV).